Here is a 349-residue protein sequence, read N- to C-terminus: Insulin gene enhancer protein isl-1 (349 aa).

LIM zinc-binding domains lie at 17–70 and 79–133; these read CVGC…CKRD and CAKC…RADH. Positions 181 to 240 form a DNA-binding region, homeobox; sequence TTRVRTVLNEKQLHTLRTCYNANPRPDALMKEQLVEMTGLSPRVIRVWFQNKRCKDKKRS. The segment at 312–349 is disordered; it reads VNFSEGGPGSNSTGSEVASMSSQLPDTPNSMVASPIEA. Over residues 321-343 the composition is skewed to polar residues; the sequence is SNSTGSEVASMSSQLPDTPNSMV.

The protein localises to the nucleus. Functionally, DNA-binding transcriptional activator. Recognizes and binds to the consensus octamer binding site 5'-ATAATTAA-3' in promoter of target genes. Plays a fundamental role in the gene regulatory network essential for retinal ganglion cell (RGC) differentiation. May be involved in subtype specialization of primary motoneurons. May bind to insulin gene enhancer sequences. Essential for heart development. The polypeptide is Insulin gene enhancer protein isl-1 (isl1) (Danio rerio (Zebrafish)).